We begin with the raw amino-acid sequence, 618 residues long: Proline--tRNA ligase (618 aa).

Belongs to the class-II aminoacyl-tRNA synthetase family. ProS type 1 subfamily. As to quaternary structure, homodimer.

The protein resides in the cytoplasm. The catalysed reaction is tRNA(Pro) + L-proline + ATP = L-prolyl-tRNA(Pro) + AMP + diphosphate. In terms of biological role, catalyzes the attachment of proline to tRNA(Pro) in a two-step reaction: proline is first activated by ATP to form Pro-AMP and then transferred to the acceptor end of tRNA(Pro). As ProRS can inadvertently accommodate and process non-cognate amino acids such as alanine and cysteine, to avoid such errors it has two additional distinct editing activities against alanine. One activity is designated as 'pretransfer' editing and involves the tRNA(Pro)-independent hydrolysis of activated Ala-AMP. The other activity is designated 'posttransfer' editing and involves deacylation of mischarged Ala-tRNA(Pro). The misacylated Cys-tRNA(Pro) is not edited by ProRS. The protein is Proline--tRNA ligase of Streptococcus equi subsp. zooepidemicus (strain H70).